Here is a 238-residue protein sequence, read N- to C-terminus: 2-C-methyl-D-erythritol 4-phosphate cytidylyltransferase (238 aa).

The protein belongs to the IspD/TarI cytidylyltransferase family. IspD subfamily.

The catalysed reaction is 2-C-methyl-D-erythritol 4-phosphate + CTP + H(+) = 4-CDP-2-C-methyl-D-erythritol + diphosphate. Its pathway is isoprenoid biosynthesis; isopentenyl diphosphate biosynthesis via DXP pathway; isopentenyl diphosphate from 1-deoxy-D-xylulose 5-phosphate: step 2/6. In terms of biological role, catalyzes the formation of 4-diphosphocytidyl-2-C-methyl-D-erythritol from CTP and 2-C-methyl-D-erythritol 4-phosphate (MEP). The chain is 2-C-methyl-D-erythritol 4-phosphate cytidylyltransferase from Pelotomaculum thermopropionicum (strain DSM 13744 / JCM 10971 / SI).